The chain runs to 582 residues: MLDRRIFSDPNGNEVRWVVGSAWPYIYAVPHLGNLIGSLLSADVFTRYLKLKGYDVVFVTGSDEHGTPIEVEAIKLGIEPRQLTDRMHEIIVKLLKLWGIEPDNYTRTESEVHKWYVRDAFTKIYNNGYIFTKDDELPYCPRDKIFLPDRFVIGTCPYCGYPYARGDQCENCGRLLEPRMLINPKCAICGSTPEWRLTRHWYLDLRRLEDRIRSYIEGNSALPDNAKQMSLGILKEGLRPRAITRDNKWGIPAPFPGAEGKTIYVWFEAVLGYVSATIEYFRRLGREDDWRRFWFNKGTRVVFFIGKDNIPFHTIIFPALLMATGEDYVMPWTTSSTEYLIFEGKKFSKSQRVGIWADEAIALLPADYWRFYLIYNRPEQRDSNFTWDSFLDVVNSIMNDTVGNFIHRVLTLAKRRWGTVPGDVKMIEQDQEIYGKVLEILNTVEEDYERIMLKDAVSQSIEIARIGNKYLNERQPWRLSEVEFNSAIYMLMSIVKTLSITLAPVIPFSINELWRMMGYSNGLRWGDARKPIEQGLRLSEPKPLFRKISKEELNVMLKKLDEIRDIKDKGKYPWEQAYLPNP.

The 'HIGH' region motif lies at proline 24–asparagine 34. Positions 156, 159, 169, and 172 each coordinate Zn(2+). Positions lysine 346–serine 350 match the 'KMSKS' region motif. ATP is bound at residue lysine 349.

This sequence belongs to the class-I aminoacyl-tRNA synthetase family. MetG type 1 subfamily. The cofactor is Zn(2+).

It is found in the cytoplasm. It catalyses the reaction tRNA(Met) + L-methionine + ATP = L-methionyl-tRNA(Met) + AMP + diphosphate. In terms of biological role, is required not only for elongation of protein synthesis but also for the initiation of all mRNA translation through initiator tRNA(fMet) aminoacylation. The protein is Methionine--tRNA ligase of Caldivirga maquilingensis (strain ATCC 700844 / DSM 13496 / JCM 10307 / IC-167).